A 120-amino-acid polypeptide reads, in one-letter code: Large ribosomal subunit protein uL18 (120 aa).

This sequence belongs to the universal ribosomal protein uL18 family. As to quaternary structure, part of the 50S ribosomal subunit; part of the 5S rRNA/L5/L18/L25 subcomplex. Contacts the 5S and 23S rRNAs.

This is one of the proteins that bind and probably mediate the attachment of the 5S RNA into the large ribosomal subunit, where it forms part of the central protuberance. This Afipia carboxidovorans (strain ATCC 49405 / DSM 1227 / KCTC 32145 / OM5) (Oligotropha carboxidovorans) protein is Large ribosomal subunit protein uL18.